We begin with the raw amino-acid sequence, 429 residues long: DNA polymerase delta small subunit (429 aa).

The protein belongs to the DNA polymerase delta/II small subunit family. In terms of assembly, heterodimer with subunits of 125 kDa and 50 kDa.

It localises to the nucleus. The catalysed reaction is DNA(n) + a 2'-deoxyribonucleoside 5'-triphosphate = DNA(n+1) + diphosphate. In terms of biological role, the function of the small subunit is not yet clear. This chain is DNA polymerase delta small subunit (POLD2), found in Oryza sativa subsp. japonica (Rice).